The primary structure comprises 159 residues: MRCPFCGSEDTQVKDSRPAEDNTSIRRRRICPDCGGRFTTYERVQLRELMVIKKSGRKLPFDREKLVRSFEIALRKRPVDRDRIERAVSGIARRLESSGETEIPSEEIGLQVLEALKSLDDVAFVRYASVYRDFSHAEDFENVIAEINAKIARDTDAGA.

A disordered region spans residues 1–22 (MRCPFCGSEDTQVKDSRPAEDN). A zinc finger lies at 3–34 (CPFCGSEDTQVKDSRPAEDNTSIRRRRICPDC). Residues 11–22 (TQVKDSRPAEDN) are compositionally biased toward basic and acidic residues. In terms of domain architecture, ATP-cone spans 49-139 (LMVIKKSGRK…VYRDFSHAED (91 aa)).

Belongs to the NrdR family. The cofactor is Zn(2+).

Negatively regulates transcription of bacterial ribonucleotide reductase nrd genes and operons by binding to NrdR-boxes. The polypeptide is Transcriptional repressor NrdR (Agrobacterium fabrum (strain C58 / ATCC 33970) (Agrobacterium tumefaciens (strain C58))).